The chain runs to 81 residues: TSQPDCSVGCDTSYCPDTSSCNCGTFADYCKCCQYCNACAGKTCNMIAGQSCEDGYLCRPPEGYSYIDVVTGRISSLCLRI.

In terms of assembly, multimeric. Hemolymph; Hemocyte.

The chain is 8.6 kDa transglutaminase substrate from Tachypleus tridentatus (Japanese horseshoe crab).